The following is a 349-amino-acid chain: Beta-hexosaminidase (349 aa).

Substrate contacts are provided by residues Asp64, Arg72, Arg138, and Lys168–His169. His181 functions as the Proton donor/acceptor in the catalytic mechanism. Catalysis depends on Asp252, which acts as the Nucleophile.

Belongs to the glycosyl hydrolase 3 family. NagZ subfamily.

The protein localises to the cytoplasm. It carries out the reaction Hydrolysis of terminal non-reducing N-acetyl-D-hexosamine residues in N-acetyl-beta-D-hexosaminides.. The protein operates within cell wall biogenesis; peptidoglycan recycling. Functionally, plays a role in peptidoglycan recycling by cleaving the terminal beta-1,4-linked N-acetylglucosamine (GlcNAc) from peptide-linked peptidoglycan fragments, giving rise to free GlcNAc, anhydro-N-acetylmuramic acid and anhydro-N-acetylmuramic acid-linked peptides. This chain is Beta-hexosaminidase, found in Nitrosospira multiformis (strain ATCC 25196 / NCIMB 11849 / C 71).